Here is a 532-residue protein sequence, read N- to C-terminus: Spore coat protein SP85 (532 aa).

The first 19 residues, Met-1–Ala-19, serve as a signal peptide directing secretion. Residue Asn-47 is glycosylated (N-linked (GlcNAc...) asparagine). The disordered stretch occupies residues Thr-197–Val-265. Pro residues predominate over residues Thr-201–Pro-263. In terms of domain architecture, Follistatin-like 1 spans Asp-267–Val-289. The tract at residues Thr-297–Pro-320 is disordered. 3 consecutive Follistatin-like domains span residues Ser-335–Val-359, Thr-400–Val-423, and Thr-430–Val-452.

Binds to cotE. In terms of processing, O-glycosylated.

The protein localises to the spore wall. Its function is as follows. Required for incorporation of cotE into the spore coat and for the formation of the outer layer. Has a cross-bridging function between cellulose and other coat proteins. This is Spore coat protein SP85 (pspB) from Dictyostelium discoideum (Social amoeba).